A 619-amino-acid polypeptide reads, in one-letter code: Chaperone protein HscA homolog (619 aa).

Belongs to the heat shock protein 70 family.

Functionally, chaperone involved in the maturation of iron-sulfur cluster-containing proteins. Has a low intrinsic ATPase activity which is markedly stimulated by HscB. This chain is Chaperone protein HscA homolog, found in Haemophilus influenzae (strain 86-028NP).